A 476-amino-acid polypeptide reads, in one-letter code: Aspartyl/glutamyl-tRNA(Asn/Gln) amidotransferase subunit B (476 aa).

It belongs to the GatB/GatE family. GatB subfamily. As to quaternary structure, heterotrimer of A, B and C subunits.

The catalysed reaction is L-glutamyl-tRNA(Gln) + L-glutamine + ATP + H2O = L-glutaminyl-tRNA(Gln) + L-glutamate + ADP + phosphate + H(+). It carries out the reaction L-aspartyl-tRNA(Asn) + L-glutamine + ATP + H2O = L-asparaginyl-tRNA(Asn) + L-glutamate + ADP + phosphate + 2 H(+). In terms of biological role, allows the formation of correctly charged Asn-tRNA(Asn) or Gln-tRNA(Gln) through the transamidation of misacylated Asp-tRNA(Asn) or Glu-tRNA(Gln) in organisms which lack either or both of asparaginyl-tRNA or glutaminyl-tRNA synthetases. The reaction takes place in the presence of glutamine and ATP through an activated phospho-Asp-tRNA(Asn) or phospho-Glu-tRNA(Gln). The polypeptide is Aspartyl/glutamyl-tRNA(Asn/Gln) amidotransferase subunit B (Clostridium botulinum (strain Kyoto / Type A2)).